The following is a 307-amino-acid chain: Bifunctional protein FolD (307 aa).

NADP(+) is bound by residues 170–172 (GRS), Ser-195, and Ile-236.

The protein belongs to the tetrahydrofolate dehydrogenase/cyclohydrolase family. As to quaternary structure, homodimer.

The catalysed reaction is (6R)-5,10-methylene-5,6,7,8-tetrahydrofolate + NADP(+) = (6R)-5,10-methenyltetrahydrofolate + NADPH. It carries out the reaction (6R)-5,10-methenyltetrahydrofolate + H2O = (6R)-10-formyltetrahydrofolate + H(+). It functions in the pathway one-carbon metabolism; tetrahydrofolate interconversion. Its function is as follows. Catalyzes the oxidation of 5,10-methylenetetrahydrofolate to 5,10-methenyltetrahydrofolate and then the hydrolysis of 5,10-methenyltetrahydrofolate to 10-formyltetrahydrofolate. The protein is Bifunctional protein FolD of Sinorhizobium fredii (strain NBRC 101917 / NGR234).